A 188-amino-acid polypeptide reads, in one-letter code: uncharacterized protein (188 aa).

The chain crosses the membrane as a helical span at residues 136–156; it reads TLVKLLLLFLSLMVVIVGVWW.

It localises to the host membrane. This is an uncharacterized protein from Magallana gigas (Pacific oyster).